The sequence spans 127 residues: Cystatin cpi-1 (127 aa).

Residues methionine 1–alanine 19 form the signal peptide. The short motif at glutamine 68–glycine 72 is the Secondary area of contact element. Cysteine 86 and cysteine 98 form a disulfide bridge.

Belongs to the cystatin family.

Functionally, cysteine protease inhibitor which inhibits members of the peptidase C1 family. Does not inhibit asparaginyl endopeptidase. This Brugia malayi (Filarial nematode worm) protein is Cystatin cpi-1.